A 351-amino-acid chain; its full sequence is Methylxanthine N1-demethylase NdmA (351 aa).

Residues 17–125 (WHPVCTVTEL…CEERYGLIWI (109 aa)) enclose the Rieske domain. [2Fe-2S] cluster-binding residues include Cys62, His64, Cys81, and His84.

[2Fe-2S] cluster is required as a cofactor.

It catalyses the reaction caffeine + NADH + O2 + H(+) = theobromine + formaldehyde + NAD(+) + H2O. The enzyme catalyses caffeine + NADPH + O2 + H(+) = theobromine + formaldehyde + NADP(+) + H2O. The catalysed reaction is theophylline + NADH + O2 + H(+) = 3-methylxanthine + formaldehyde + NAD(+) + H2O. It carries out the reaction theophylline + NADPH + O2 + H(+) = 3-methylxanthine + formaldehyde + NADP(+) + H2O. It catalyses the reaction 1,7-dimethylxanthine + NADH + O2 + H(+) = 7-methylxanthine + formaldehyde + NAD(+) + H2O. The enzyme catalyses 1,7-dimethylxanthine + NADPH + O2 + H(+) = 7-methylxanthine + formaldehyde + NADP(+) + H2O. It functions in the pathway alkaloid degradation. Involved in the caffeine degradation, which is the essential first step for assimilating the carbon and nitrogen in caffeine. Catalyzes the N1-demethylation of caffeine to produce theobromine and formaldehyde. Also catalyzes the N1-demethylation of theophylline, paraxanthine, and 1-methylxanthine to 3-methylxanthine, 7-methylxanthine, and xanthine, respectively. NADH is the preferred substrate. This is Methylxanthine N1-demethylase NdmA (ndmA) from Pseudomonas putida (Arthrobacter siderocapsulatus).